Here is a 122-residue protein sequence, read N- to C-terminus: Acidic phospholipase A2 (122 aa).

7 disulfides stabilise this stretch: C26–C115, C28–C44, C43–C95, C49–C122, C50–C88, C57–C81, and C75–C86. Ca(2+) is bound by residues Y27, G29, and G31. Residue H47 is part of the active site. D48 lines the Ca(2+) pocket. D89 is an active-site residue.

Belongs to the phospholipase A2 family. Group II subfamily. D49 sub-subfamily. Ca(2+) is required as a cofactor. Post-translationally, contains 7 disulfide bonds. Expressed by the venom gland.

The protein resides in the secreted. It catalyses the reaction a 1,2-diacyl-sn-glycero-3-phosphocholine + H2O = a 1-acyl-sn-glycero-3-phosphocholine + a fatty acid + H(+). Snake venom phospholipase A2 (PLA2) that displays low systemic toxicity and causes severe symptoms only at very high concentrations (15 mg/kg). Has neither coagulant nor anticoagulant activity. PLA2 catalyzes the calcium-dependent hydrolysis of the 2-acyl groups in 3-sn-phosphoglycerides. This Bothrops ammodytoides (Yararanata) protein is Acidic phospholipase A2.